Here is an 85-residue protein sequence, read N- to C-terminus: Splicing factor 3B subunit 5 (85 aa).

Belongs to the SF3B5 family. In terms of assembly, component of the SF3B complex. SF3B complex associates with the splicing factor SF3A complex and a 12S RNA unit to form the U2 small nuclear ribonucleoproteins complex (U2 snRNP). Identified in the SAGA transcription regulatory histone acetylation (HAT) complex; the interaction is RNA-independent.

The protein localises to the nucleus. Its function is as follows. Involved in pre-mRNA splicing as component of spliceosome. As part of the spliceosome complex, plays a role in the regulation of spermatogonial differentiation. When associated with the SAGA transcription regulatory histone acetylation (HAT) complex, might be involved in the transcriptional activation of a subset of SAGA-regulated genes. In Drosophila melanogaster (Fruit fly), this protein is Splicing factor 3B subunit 5.